The primary structure comprises 203 residues: Large ribosomal subunit protein uL13 (203 aa).

Alanine 2 is subject to N-acetylalanine. Arginine 59 is subject to Citrulline. The residue at position 77 (serine 77) is a Phosphoserine; by ZIPK/DAPK3. A Citrulline modification is found at arginine 140. Lysine 191 is subject to N6-acetyllysine.

Belongs to the universal ribosomal protein uL13 family. In terms of assembly, component of the 60S ribosome. Component of the GAIT complex. Interacts with EIF4G1. Post-translationally, phosphorylation at Ser-77 upon interferon-gamma treatment in macrophages involves a DAPK1-DAPK3 kinase cascade and is causing release from the ribosome, association with the GAIT complex and subsequent involvement in transcript-selective translation inhibition. In terms of processing, citrullinated by PADI4.

The protein localises to the cytoplasm. Its function is as follows. Associated with ribosomes but is not required for canonical ribosome function and has extra-ribosomal functions. Component of the GAIT (gamma interferon-activated inhibitor of translation) complex which mediates interferon-gamma-induced transcript-selective translation inhibition in inflammation processes. Upon interferon-gamma activation and subsequent phosphorylation dissociates from the ribosome and assembles into the GAIT complex which binds to stem loop-containing GAIT elements in the 3'-UTR of diverse inflammatory mRNAs (such as ceruplasmin) and suppresses their translation. In the GAIT complex interacts with m7G cap-bound eIF4G at or near the eIF3-binding site and blocks the recruitment of the 43S ribosomal complex. Involved in methylation of rRNA. The chain is Large ribosomal subunit protein uL13 (Rpl13a) from Mus musculus (Mouse).